The following is a 785-amino-acid chain: Terminal nucleotidyltransferase 4A (785 aa).

The interval 56 to 184 is disordered; it reads AAGRAAPAAG…QFHPGRRKRE (129 aa). Positions 68-85 are enriched in pro residues; sequence GPAPAASSPPPAPGPAAL. Composition is skewed to low complexity over residues 86–98 and 106–145; these read PPALLTALGPAAD and SPSLSSSSSSSSSNAESGTESPGCSSSSSSSTSLGRAGSG. The Mg(2+) site is built by aspartate 290 and aspartate 292. Glycine 353, lysine 378, serine 396, and tyrosine 397 together coordinate ATP. One can recognise a PAP-associated domain in the interval 421–480; sequence NLGMLLVEFFELYGRNFNYLKTGIRIKEGGAYIAKEEIMKAMTSGYRPSMLCIEDPLLPG. ATP contacts are provided by asparagine 481 and arginine 485. The segment covering 593–611 has biased composition (low complexity); sequence PQLLSSGSSASSVSSLSGS. Disordered regions lie at residues 593-625 and 731-785; these read PQLLSSGSSASSVSSLSGSDIDSDTPPCTTPSV and KGSH…SLSR. A compositionally biased stretch (basic residues) spans 757 to 774; the sequence is RGHHQYNRTGWRRKKHAH.

Belongs to the DNA polymerase type-B-like family. In terms of assembly, component of a nuclear TRAMP-like complex, an ATP-dependent exosome regulatory complex consisting of a helicase (MTREX), an oligadenylate polymerase (TENT4B or TENT4A), and a substrate specific RNA-binding factor (ZCCHC7 or ZCCHC8). Several TRAMP-like complexes exist with specific compositions and are associated with nuclear, or nucleolar RNA exosomes. Requires Mg(2+) as cofactor. It depends on Mn(2+) as a cofactor.

It localises to the cytoplasm. It is found in the nucleus. The protein localises to the nucleoplasm. It catalyses the reaction RNA(n) + ATP = RNA(n)-3'-adenine ribonucleotide + diphosphate. Its function is as follows. Terminal nucleotidyltransferase that catalyzes preferentially the transfer of ATP and GTP on RNA 3' poly(A) tail creating a heterogeneous 3' poly(A) tail leading to mRNAs stabilization by protecting mRNAs from active deadenylation. Also functions as a catalytic subunit of a TRAMP-like complex which has a poly(A) RNA polymerase activity and is involved in a post-transcriptional quality control mechanism. Polyadenylation with short oligo(A) tails is required for the degradative activity of the exosome on several of its nuclear RNA substrates. Has no terminal uridylyltransferase activity, and does not play a role in replication-dependent histone mRNA degradation via uridylation. The protein is Terminal nucleotidyltransferase 4A of Mus musculus (Mouse).